The sequence spans 314 residues: Flotillin-like protein FloA (314 aa).

Residues 4 to 24 form a helical membrane-spanning segment; sequence IGPIIIAVLIIIFLIVFFTLV.

Belongs to the flotillin-like FloA family. Homooligomerizes.

The protein localises to the cell membrane. The protein resides in the membrane raft. Its function is as follows. Found in functional membrane microdomains (FMM) that may be equivalent to eukaryotic membrane rafts. FMMs are highly dynamic and increase in number as cells age. Flotillins are thought to be important factors in membrane fluidity. The polypeptide is Flotillin-like protein FloA (Listeria innocua serovar 6a (strain ATCC BAA-680 / CLIP 11262)).